The chain runs to 293 residues: ATP phosphoribosyltransferase (293 aa).

Belongs to the ATP phosphoribosyltransferase family. Long subfamily. It depends on Mg(2+) as a cofactor.

The protein localises to the cytoplasm. The enzyme catalyses 1-(5-phospho-beta-D-ribosyl)-ATP + diphosphate = 5-phospho-alpha-D-ribose 1-diphosphate + ATP. It functions in the pathway amino-acid biosynthesis; L-histidine biosynthesis; L-histidine from 5-phospho-alpha-D-ribose 1-diphosphate: step 1/9. Feedback inhibited by histidine. Its function is as follows. Catalyzes the condensation of ATP and 5-phosphoribose 1-diphosphate to form N'-(5'-phosphoribosyl)-ATP (PR-ATP). Has a crucial role in the pathway because the rate of histidine biosynthesis seems to be controlled primarily by regulation of HisG enzymatic activity. This is ATP phosphoribosyltransferase from Nitratidesulfovibrio vulgaris (strain DSM 19637 / Miyazaki F) (Desulfovibrio vulgaris).